Reading from the N-terminus, the 473-residue chain is MTKGRVTQIMGPVVDVKFDNGHLPAIYNALKISHKPSSASEVAIELTLEVAIHLGDNTVRTVAMSSTDGLVRGLEVEDTGAAISVPVGDVTLGRVFNVLGEKIDLDAPIDAGARRDPIHRQAPKFENLSTQAEILETGIKVVDLLAPYIKGGKIGLFGGAGVGKTVLIQELINNIAQEHGGISVFAGVGERTREGNDLYHEMTDSGVIKKTAMVFGQMNEPPGARQRVALTGLTMAEYFRDEQGQDVLFFIDNIFRFTQAGSEVSALLGRMPSAVGYQPTLATEMGQLQERITSTSVGSVTSIQAIYVPADDYTDPAPATTFAHLDATTNLERKLSEMGIYPAVDPLASTSRALSPEIVGEEHYAIARQVQQTLQRYKELQDIIAILGMDELSDEDKLVVQRARRVQFFLSQNFHVAEQFTGQKGSYVPVKETVKGFKEILEGKYDHLPEDAFRLVGRIEEVIENAKRMGVEV.

158–165 contributes to the ATP binding site; sequence GGAGVGKT.

This sequence belongs to the ATPase alpha/beta chains family. In terms of assembly, F-type ATPases have 2 components, CF(1) - the catalytic core - and CF(0) - the membrane proton channel. CF(1) has five subunits: alpha(3), beta(3), gamma(1), delta(1), epsilon(1). CF(0) has three main subunits: a(1), b(2) and c(9-12). The alpha and beta chains form an alternating ring which encloses part of the gamma chain. CF(1) is attached to CF(0) by a central stalk formed by the gamma and epsilon chains, while a peripheral stalk is formed by the delta and b chains.

It localises to the cell membrane. It carries out the reaction ATP + H2O + 4 H(+)(in) = ADP + phosphate + 5 H(+)(out). Produces ATP from ADP in the presence of a proton gradient across the membrane. The catalytic sites are hosted primarily by the beta subunits. This Priestia megaterium (strain ATCC 12872 / QMB1551) (Bacillus megaterium) protein is ATP synthase subunit beta.